The following is a 159-amino-acid chain: Neuroglobin (159 aa).

In terms of domain architecture, Globin spans 3-151; it reads KLSEKDKELI…VVAAMSQGWA (149 aa). Heme b is bound by residues histidine 66 and histidine 98.

The protein belongs to the globin family. Monomer. Homodimers and homotetramers. Mainly monomeric but also detected as part of homodimers and homotetramers.

The protein localises to the cytoplasm. It is found in the cytosol. Its subcellular location is the mitochondrion matrix. It carries out the reaction Fe(III)-heme b-[protein] + nitric oxide + H2O = Fe(II)-heme b-[protein] + nitrite + 2 H(+). Functionally, monomeric globin with a bis-histidyl six-coordinate heme-iron atom through which it can bind dioxygen, carbon monoxide and nitric oxide. Could help transport oxygen and increase its availability to the metabolically active neuronal tissues, though its low quantity in tissues as well as its high affinity for dioxygen, which may limit its oxygen-releasing ability, argue against it. The ferrous/deoxygenated form exhibits a nitrite reductase activity and it could produce nitric oxide which in turn inhibits cellular respiration in response to hypoxia. In its ferrous/deoxygenated state, it may also exhibit GDI (Guanine nucleotide Dissociation Inhibitor) activity toward heterotrimeric G-alpha proteins, thereby regulating signal transduction to facilitate neuroprotective responses in the wake of hypoxia and associated oxidative stress. This is Neuroglobin (ngb) from Chaenocephalus aceratus (Blackfin icefish).